Here is a 698-residue protein sequence, read N- to C-terminus: Polyribonucleotide nucleotidyltransferase (698 aa).

D490 and D496 together coordinate Mg(2+). Residues 557 to 616 (PKVVTMTIKPDKIRDVIGPGGKKINEIIDETGVKLDIEQDGTIFIGAVDQAMINRAREII) enclose the KH domain. In terms of domain architecture, S1 motif spans 626–694 (GQTYQATVKR…KQGRVNASHR (69 aa)).

Belongs to the polyribonucleotide nucleotidyltransferase family. The cofactor is Mg(2+).

The protein resides in the cytoplasm. The catalysed reaction is RNA(n+1) + phosphate = RNA(n) + a ribonucleoside 5'-diphosphate. Its function is as follows. Involved in mRNA degradation. Catalyzes the phosphorolysis of single-stranded polyribonucleotides processively in the 3'- to 5'-direction. The polypeptide is Polyribonucleotide nucleotidyltransferase (Staphylococcus aureus (strain bovine RF122 / ET3-1)).